Consider the following 621-residue polypeptide: Type 2 DNA topoisomerase 6 subunit B (621 aa).

ATP is bound by residues Asn-48, Asp-80, 101–102 (SR), 111–118 (GQQGIGIS), and Lys-435.

It belongs to the TOP6B family. As to quaternary structure, homodimer. Heterotetramer of two Top6A and two Top6B chains.

The enzyme catalyses ATP-dependent breakage, passage and rejoining of double-stranded DNA.. In terms of biological role, relaxes both positive and negative superturns and exhibits a strong decatenase activity. The sequence is that of Type 2 DNA topoisomerase 6 subunit B from Methanosarcina acetivorans (strain ATCC 35395 / DSM 2834 / JCM 12185 / C2A).